The primary structure comprises 408 residues: tRNA-specific 2-thiouridylase MnmA (408 aa).

ATP contacts are provided by residues 27 to 34 (AMSGGVDS) and Leu53. Cys121 functions as the Nucleophile in the catalytic mechanism. A disulfide bridge links Cys121 with Cys222. Gly145 contacts ATP. The tract at residues 172–174 (RDQ) is interaction with tRNA. The active-site Cysteine persulfide intermediate is Cys222.

Belongs to the MnmA/TRMU family.

The protein resides in the cytoplasm. It carries out the reaction S-sulfanyl-L-cysteinyl-[protein] + uridine(34) in tRNA + AH2 + ATP = 2-thiouridine(34) in tRNA + L-cysteinyl-[protein] + A + AMP + diphosphate + H(+). Functionally, catalyzes the 2-thiolation of uridine at the wobble position (U34) of tRNA, leading to the formation of s(2)U34. In Rhizobium johnstonii (strain DSM 114642 / LMG 32736 / 3841) (Rhizobium leguminosarum bv. viciae), this protein is tRNA-specific 2-thiouridylase MnmA.